A 178-amino-acid polypeptide reads, in one-letter code: Bifunctional protein PyrR (178 aa).

The PRPP-binding signature appears at 99 to 111; the sequence is VILVDDVLFTGRT.

It belongs to the purine/pyrimidine phosphoribosyltransferase family. PyrR subfamily. In terms of assembly, homodimer and homohexamer; in equilibrium.

It carries out the reaction UMP + diphosphate = 5-phospho-alpha-D-ribose 1-diphosphate + uracil. In terms of biological role, regulates transcriptional attenuation of the pyrimidine nucleotide (pyr) operon by binding in a uridine-dependent manner to specific sites on pyr mRNA. This disrupts an antiterminator hairpin in the RNA and favors formation of a downstream transcription terminator, leading to a reduced expression of downstream genes. Also displays a weak uracil phosphoribosyltransferase activity which is not physiologically significant. This Limosilactobacillus reuteri subsp. reuteri (strain JCM 1112) (Lactobacillus reuteri) protein is Bifunctional protein PyrR.